The primary structure comprises 603 residues: Proline--tRNA ligase (603 aa).

It belongs to the class-II aminoacyl-tRNA synthetase family. ProS type 1 subfamily. In terms of assembly, homodimer.

It localises to the cytoplasm. The enzyme catalyses tRNA(Pro) + L-proline + ATP = L-prolyl-tRNA(Pro) + AMP + diphosphate. Catalyzes the attachment of proline to tRNA(Pro) in a two-step reaction: proline is first activated by ATP to form Pro-AMP and then transferred to the acceptor end of tRNA(Pro). As ProRS can inadvertently accommodate and process non-cognate amino acids such as alanine and cysteine, to avoid such errors it has two additional distinct editing activities against alanine. One activity is designated as 'pretransfer' editing and involves the tRNA(Pro)-independent hydrolysis of activated Ala-AMP. The other activity is designated 'posttransfer' editing and involves deacylation of mischarged Ala-tRNA(Pro). The misacylated Cys-tRNA(Pro) is not edited by ProRS. The sequence is that of Proline--tRNA ligase from Synechocystis sp. (strain ATCC 27184 / PCC 6803 / Kazusa).